Here is a 147-residue protein sequence, read N- to C-terminus: Transmembrane protein 210 (147 aa).

The N-terminal stretch at 1 to 31 (MAPGPWPVSCLRGGPLGLTYLSLLLIPAAAG) is a signal peptide. Over 32–47 (TYCECSLGLSREALIA) the chain is Extracellular. Residues 48–68 (LLVVLAGISASCFCALVIVAI) traverse the membrane as a helical segment. The Cytoplasmic segment spans residues 69 to 147 (GVLRAKGETC…PPPPPPLPPE (79 aa)). Residues 128–147 (AIPMEASSEEPPPPPPLPPE) form a disordered region. Over residues 137 to 147 (EPPPPPPLPPE) the composition is skewed to pro residues.

Its subcellular location is the membrane. It is found in the cytoplasmic vesicle. The protein localises to the secretory vesicle. It localises to the acrosome. In Homo sapiens (Human), this protein is Transmembrane protein 210 (TMEM210).